Consider the following 370-residue polypeptide: Pyruvate dehydrogenase E1 component subunit alpha (370 aa).

In terms of assembly, heterodimer of an alpha and a beta chain. Thiamine diphosphate serves as cofactor.

It carries out the reaction N(6)-[(R)-lipoyl]-L-lysyl-[protein] + pyruvate + H(+) = N(6)-[(R)-S(8)-acetyldihydrolipoyl]-L-lysyl-[protein] + CO2. In terms of biological role, the pyruvate dehydrogenase complex catalyzes the overall conversion of pyruvate to acetyl-CoA and CO(2). It contains multiple copies of three enzymatic components: pyruvate dehydrogenase (E1), dihydrolipoamide acetyltransferase (E2) and lipoamide dehydrogenase (E3). This Staphylococcus aureus (strain MRSA252) protein is Pyruvate dehydrogenase E1 component subunit alpha (pdhA).